The chain runs to 122 residues: Large ribosomal subunit protein uL18 (122 aa).

It belongs to the universal ribosomal protein uL18 family. In terms of assembly, part of the 50S ribosomal subunit; part of the 5S rRNA/L5/L18/L25 subcomplex. Contacts the 5S and 23S rRNAs.

Functionally, this is one of the proteins that bind and probably mediate the attachment of the 5S RNA into the large ribosomal subunit, where it forms part of the central protuberance. This Buchnera aphidicola subsp. Acyrthosiphon pisum (strain 5A) protein is Large ribosomal subunit protein uL18.